Here is a 93-residue protein sequence, read N- to C-terminus: Chaperone NapD (93 aa).

Belongs to the NapD family. Interacts with the cytoplasmic NapA precursor.

It localises to the cytoplasm. Chaperone for NapA, the catalytic subunit of the periplasmic nitrate reductase. It binds directly and specifically to the twin-arginine signal peptide of NapA, preventing premature interaction with the Tat translocase and premature export. This Haemophilus influenzae (strain ATCC 51907 / DSM 11121 / KW20 / Rd) protein is Chaperone NapD.